Reading from the N-terminus, the 138-residue chain is SPbeta prophage-derived uncharacterized protein YopJ (138 aa).

This chain is SPbeta prophage-derived uncharacterized protein YopJ (yopJ), found in Bacillus subtilis (strain 168).